The primary structure comprises 241 residues: Homeobox protein TGIF2LX (241 aa).

2 disordered regions span residues 1–58 and 126–210; these read MEAA…GNLP and TGKD…SPEE. Residues 21–39 are compositionally biased toward polar residues; it reads AKTQSPAQDTSIMSRNNAD. A DNA-binding region (homeobox; TALE-type) is located at residues 48–111; sequence EHKKKRKGNL…INARRRILPD (64 aa). Residues 195-206 are compositionally biased toward low complexity; sequence VSVTSPSSPELV.

The protein belongs to the TALE/TGIF homeobox family. In terms of tissue distribution, specifically expressed in adult testis.

Its subcellular location is the nucleus. Its function is as follows. May have a transcription role in testis. This is Homeobox protein TGIF2LX (TGIF2LX) from Homo sapiens (Human).